We begin with the raw amino-acid sequence, 388 residues long: Bifunctional enzyme IspD/IspF (388 aa).

The tract at residues 1–228 is 2-C-methyl-D-erythritol 4-phosphate cytidylyltransferase; the sequence is MRIAALLLAA…GVIDRNLLPR (228 aa). Positions 228 to 388 are 2-C-methyl-D-erythritol 2,4-cyclodiphosphate synthase; it reads RVGLGYDVHA…SIMVPDNGEA (161 aa). Asp234 and His236 together coordinate a divalent metal cation. 4-CDP-2-C-methyl-D-erythritol 2-phosphate contacts are provided by residues 234-236 and 260-261; these read DVH and HS. Residue His268 coordinates a divalent metal cation. 4-CDP-2-C-methyl-D-erythritol 2-phosphate is bound by residues 282-284, 358-361, Phe365, and Arg368; these read DIG and TTSE.

The protein in the N-terminal section; belongs to the IspD/TarI cytidylyltransferase family. IspD subfamily. In the C-terminal section; belongs to the IspF family. It depends on a divalent metal cation as a cofactor.

The catalysed reaction is 2-C-methyl-D-erythritol 4-phosphate + CTP + H(+) = 4-CDP-2-C-methyl-D-erythritol + diphosphate. It carries out the reaction 4-CDP-2-C-methyl-D-erythritol 2-phosphate = 2-C-methyl-D-erythritol 2,4-cyclic diphosphate + CMP. It participates in isoprenoid biosynthesis; isopentenyl diphosphate biosynthesis via DXP pathway; isopentenyl diphosphate from 1-deoxy-D-xylulose 5-phosphate: step 2/6. The protein operates within isoprenoid biosynthesis; isopentenyl diphosphate biosynthesis via DXP pathway; isopentenyl diphosphate from 1-deoxy-D-xylulose 5-phosphate: step 4/6. Functionally, bifunctional enzyme that catalyzes the formation of 4-diphosphocytidyl-2-C-methyl-D-erythritol from CTP and 2-C-methyl-D-erythritol 4-phosphate (MEP) (IspD), and catalyzes the conversion of 4-diphosphocytidyl-2-C-methyl-D-erythritol 2-phosphate (CDP-ME2P) to 2-C-methyl-D-erythritol 2,4-cyclodiphosphate (ME-CPP) with a corresponding release of cytidine 5-monophosphate (CMP) (IspF). This Gluconobacter oxydans (strain 621H) (Gluconobacter suboxydans) protein is Bifunctional enzyme IspD/IspF.